The sequence spans 365 residues: Serpentine receptor class epsilon-21 (365 aa).

The next 7 helical transmembrane spans lie at 49–69 (ILIN…VFCI), 82–102 (IIIS…FVFI), 116–136 (LLFW…HTLL), 158–178 (VWIA…YAFL), 189–209 (IFIV…IIYF), 250–270 (VVVV…PIIL), and 292–314 (PLVV…LSYY).

Belongs to the nematode receptor-like protein sre family.

The protein resides in the membrane. In Caenorhabditis elegans, this protein is Serpentine receptor class epsilon-21 (sre-21).